We begin with the raw amino-acid sequence, 358 residues long: Thiol protease aleurain-like (358 aa).

An N-terminal signal peptide occupies residues 1–21 (MSVKLNLSSSILLILFAAAAS). The propeptide at 22 to 140 (KEIGFDESNP…KGSHKITEAT (119 aa)) is activation peptide. Asn-125 carries an N-linked (GlcNAc...) asparagine glycan. 2 cysteine pairs are disulfide-bonded: Cys-162–Cys-205 and Cys-196–Cys-238. The active site involves Cys-165. Residue Asn-254 is glycosylated (N-linked (GlcNAc...) asparagine). Cys-296 and Cys-346 are joined by a disulfide. Active-site residues include His-305 and Asn-325.

This sequence belongs to the peptidase C1 family.

The protein resides in the vacuole. The catalysed reaction is Hydrolysis of proteins, acting as an aminopeptidase (notably, cleaving Arg-|-Xaa bonds) as well as an endopeptidase.. May play a role in proteolysis leading to mobilization of nitrogen during senescence and starvation. The chain is Thiol protease aleurain-like from Arabidopsis thaliana (Mouse-ear cress).